The chain runs to 381 residues: MATNIRKTHPLLKIVNHALIDLPAPSNISVWWNFGSLLGLCLIMQIITGLFLAMHYTADISMAFSSVIHISRDVNYGWLMRNIHAYGASFFFICIYLHIARGLYYGSYLNKEAWNIGVVLLFLLMATAFVGYVLPWGQMSFWGATVITNLLSAFPYIGNLLVQWIWGGFSVDNATLTRFFAFHFLLPFLILALSVIHILFLHETGANNPMGINSNTDKISFHPYFSYKDLFGFLIVITLLATLALFMPNLLGDAENFIPANPLVTPLHIQPEWYFLFAYAILRSIPNKLGGVLALLFSIFILLLVPLLHTSKLRSNIFRPLTQIFFWSLVTNAIILTWIGGQPVEQPFIMVGQIASVAYFSLFLFVIPITSWCENKFLSLN.

The next 4 membrane-spanning stretches (helical) occupy residues 34-54 (FGSL…FLAM), 78-99 (WLMR…YLHI), 114-134 (WNIG…GYVL), and 179-199 (FFAF…IHIL). Heme b-binding residues include His84 and His98. Heme b-binding residues include His183 and His197. His202 serves as a coordination point for a ubiquinone. 4 helical membrane-spanning segments follow: residues 227 to 247 (YKDL…ALFM), 289 to 309 (LGGV…PLLH), 321 to 341 (LTQI…WIGG), and 348 to 368 (FIMV…FVIP).

It belongs to the cytochrome b family. As to quaternary structure, the cytochrome bc1 complex contains 3 respiratory subunits (MT-CYB, CYC1 and UQCRFS1), 2 core proteins (UQCRC1 and UQCRC2) and probably 6 low-molecular weight proteins. Heme b is required as a cofactor.

Its subcellular location is the mitochondrion inner membrane. Functionally, component of the ubiquinol-cytochrome c reductase complex (complex III or cytochrome b-c1 complex) that is part of the mitochondrial respiratory chain. The b-c1 complex mediates electron transfer from ubiquinol to cytochrome c. Contributes to the generation of a proton gradient across the mitochondrial membrane that is then used for ATP synthesis. This is Cytochrome b (mt-cyb) from Scyliorhinus canicula (Small-spotted catshark).